The primary structure comprises 409 residues: Probable type I inositol 1,4,5-trisphosphate 5-phosphatase (409 aa).

This sequence belongs to the inositol 1,4,5-trisphosphate 5-phosphatase type I family.

It carries out the reaction 1D-myo-inositol 1,4,5-trisphosphate + H2O = 1D-myo-inositol 1,4-bisphosphate + phosphate. The enzyme catalyses 1D-myo-inositol 1,3,4,5-tetrakisphosphate + H2O = 1D-myo-inositol 1,3,4-trisphosphate + phosphate. In Caenorhabditis elegans, this protein is Probable type I inositol 1,4,5-trisphosphate 5-phosphatase (ipp-5).